The chain runs to 388 residues: Proteasomal ubiquitin receptor ADRM1 homolog rpn1302 (388 aa).

The 118-residue stretch at R15–P132 folds into the Pru domain. 2 disordered regions span residues R202–T227 and S368–E388. A compositionally biased stretch (acidic residues) spans S368 to D377. Residues V378–E388 show a composition bias toward basic and acidic residues.

This sequence belongs to the ADRM1 family. As to quaternary structure, component of the 19S proteasome regulatory particle complex. The 2 S.pombe rpn13 homologs, rpn1301 and rpn1302 are present at a 0.2-1 ratio.

It localises to the cytoplasm. The protein localises to the nucleus. In terms of biological role, component of the 26S proteasome, a multiprotein complex involved in the ATP-dependent degradation of ubiquitinated proteins. This complex plays a key role in the maintenance of protein homeostasis by removing misfolded or damaged proteins, which could impair cellular functions, and by removing proteins whose functions are no longer required. Therefore, the proteasome participates in numerous cellular processes, including cell cycle progression, apoptosis, or DNA damage repair. Within the complex, functions as a proteasomal ubiquitin receptor. The polypeptide is Proteasomal ubiquitin receptor ADRM1 homolog rpn1302 (rpn1302) (Schizosaccharomyces pombe (strain 972 / ATCC 24843) (Fission yeast)).